A 368-amino-acid chain; its full sequence is (3S,6E)-nerolidol synthase (368 aa).

Mg(2+) is bound by residues Asp-91, Asn-228, and Ser-232. The DDXXE motif motif lies at 91–95 (DDLLE).

It belongs to the terpene synthase family. Mg(2+) serves as cofactor. Mn(2+) is required as a cofactor.

The catalysed reaction is (2E,6E)-farnesyl diphosphate + H2O = (3S,6E)-nerolidol + diphosphate. The enzyme catalyses (2E)-geranyl diphosphate + H2O = (S)-linalool + diphosphate. Its pathway is secondary metabolite biosynthesis; terpenoid biosynthesis. In terms of biological role, sesquiterpene synthase converting farnesyl diphosphate to nerolidol. Also has a monoterpene synthase activity, converting geranyl diphosphate into linalool as the major product. Has no diterpene synthase activity. This is (3S,6E)-nerolidol synthase from Selaginella moellendorffii (Spikemoss).